Consider the following 236-residue polypeptide: 2-C-methyl-D-erythritol 4-phosphate cytidylyltransferase (236 aa).

Belongs to the IspD/TarI cytidylyltransferase family. IspD subfamily. Homodimer.

It catalyses the reaction 2-C-methyl-D-erythritol 4-phosphate + CTP + H(+) = 4-CDP-2-C-methyl-D-erythritol + diphosphate. Its pathway is isoprenoid biosynthesis; isopentenyl diphosphate biosynthesis via DXP pathway; isopentenyl diphosphate from 1-deoxy-D-xylulose 5-phosphate: step 2/6. Catalyzes the formation of 4-diphosphocytidyl-2-C-methyl-D-erythritol from CTP and 2-C-methyl-D-erythritol 4-phosphate (MEP). This Shigella flexneri serotype 5b (strain 8401) protein is 2-C-methyl-D-erythritol 4-phosphate cytidylyltransferase.